The primary structure comprises 249 residues: Phosphonates import ATP-binding protein PhnC (249 aa).

One can recognise an ABC transporter domain in the interval 2–246; it reads IEFKKVEKVW…KLNESKLEEI (245 aa). 35-42 contributes to the ATP binding site; it reads GLSGAGKT.

Belongs to the ABC transporter superfamily. Phosphonates importer (TC 3.A.1.9.1) family. In terms of assembly, the complex is composed of two ATP-binding proteins (PhnC), two transmembrane proteins (PhnE) and a solute-binding protein (PhnD).

It is found in the cell membrane. The enzyme catalyses phosphonate(out) + ATP + H2O = phosphonate(in) + ADP + phosphate + H(+). In terms of biological role, part of the ABC transporter complex PhnCDE involved in phosphonates import. Responsible for energy coupling to the transport system. This chain is Phosphonates import ATP-binding protein PhnC, found in Mesoplasma florum (strain ATCC 33453 / NBRC 100688 / NCTC 11704 / L1) (Acholeplasma florum).